We begin with the raw amino-acid sequence, 250 residues long: Testis-expressed protein 101 (250 aa).

Residues 1–25 (MGACRIQYVLLIFLLIASRWTLVQN) form the signal peptide. N-linked (GlcNAc...) asparagine glycosylation is found at Asn-45, Asn-110, Asn-134, and Asn-160. The UPAR/Ly6 domain maps to 141–215 (CPTCVALGSC…VKETCSYQSF (75 aa)). Gly-224 is lipidated: GPI-anchor amidated glycine. A propeptide spans 225 to 250 (ASQMPTSLWVLELLFPLLLLPLTHFP) (removed in mature form).

Interacts with VAMP3. Interacts with LY6K. Interacts with DPEP3; co-localized on the cell surface of spermatocytes, spermatids, and testicular spermatozoa, co-localized only in cytoplasmic droplets of caput and corpus epididymal sperm. Interacts with ADAM3; co-localized on sperm surface. Interacts with ADAM5. Post-translationally, N-glycosylated; by high mannose and/or biantennary complex and/or certain types of hybrid oligosaccharides; possesses different oligosaccharides chains according to its subcellular localization in the testis. Sheds from membrane raft by ACE and released from the cell surface of epididymal sperm while it passes through the caput epididymis leading to disappearance of TEX101 on spermatozoa; is essential to produce fertile spermatozoa. Detected in testis and ovary. Expressed in spermatocytes, spermatids and testicular spermatozoa, but not in spermatogonia or interstitial cells. Expressed abundantly in testicular germ cells (TGCs) but mostly disappeared from epididymal spermatozoa.

It localises to the cell membrane. The protein localises to the membrane raft. Its subcellular location is the cytoplasmic vesicle. The protein resides in the secretory vesicle. It is found in the acrosome. It localises to the secreted. Its function is as follows. Plays a role in fertilization by controlling binding of sperm to zona pellucida and migration of spermatozoa into the oviduct probably through molecule adhesion ADAM3. May play a role in signal transduction and promote protein tyrosine phosphorylation. The chain is Testis-expressed protein 101 from Mus musculus (Mouse).